The sequence spans 68 residues: Large ribosomal subunit protein uL29 (68 aa).

The protein belongs to the universal ribosomal protein uL29 family.

This Geobacillus sp. (strain WCH70) protein is Large ribosomal subunit protein uL29.